Consider the following 954-residue polypeptide: Bifunctional glutamine synthetase adenylyltransferase/adenylyl-removing enzyme (954 aa).

The adenylyl removase stretch occupies residues 1–452; it reads MAVQKDSNKS…HFKATVGGEE (452 aa). Residues 458–954 are adenylyl transferase; the sequence is EHWTAQLWNV…ILAIYQAILE (497 aa).

It belongs to the GlnE family. Mg(2+) is required as a cofactor.

It carries out the reaction [glutamine synthetase]-O(4)-(5'-adenylyl)-L-tyrosine + phosphate = [glutamine synthetase]-L-tyrosine + ADP. The enzyme catalyses [glutamine synthetase]-L-tyrosine + ATP = [glutamine synthetase]-O(4)-(5'-adenylyl)-L-tyrosine + diphosphate. Its function is as follows. Involved in the regulation of glutamine synthetase GlnA, a key enzyme in the process to assimilate ammonia. When cellular nitrogen levels are high, the C-terminal adenylyl transferase (AT) inactivates GlnA by covalent transfer of an adenylyl group from ATP to specific tyrosine residue of GlnA, thus reducing its activity. Conversely, when nitrogen levels are low, the N-terminal adenylyl removase (AR) activates GlnA by removing the adenylyl group by phosphorolysis, increasing its activity. The regulatory region of GlnE binds the signal transduction protein PII (GlnB) which indicates the nitrogen status of the cell. The protein is Bifunctional glutamine synthetase adenylyltransferase/adenylyl-removing enzyme of Shewanella oneidensis (strain ATCC 700550 / JCM 31522 / CIP 106686 / LMG 19005 / NCIMB 14063 / MR-1).